Here is a 463-residue protein sequence, read N- to C-terminus: tRNA-2-methylthio-N(6)-dimethylallyladenosine synthase (463 aa).

The 119-residue stretch at 18–136 folds into the MTTase N-terminal domain; it reads RKLYIETYGC…LPNLVGAAEQ (119 aa). 6 residues coordinate [4Fe-4S] cluster: cysteine 27, cysteine 63, cysteine 100, cysteine 174, cysteine 178, and cysteine 181. Positions 160 to 392 constitute a Radical SAM core domain; that stretch reads GGVHINGFVS…IALQNRLSEE (233 aa). Positions 395–458 constitute a TRAM domain; the sequence is KRDIGKTFEV…SATLFGEVVE (64 aa).

Belongs to the methylthiotransferase family. MiaB subfamily. In terms of assembly, monomer. Requires [4Fe-4S] cluster as cofactor.

It localises to the cytoplasm. It carries out the reaction N(6)-dimethylallyladenosine(37) in tRNA + (sulfur carrier)-SH + AH2 + 2 S-adenosyl-L-methionine = 2-methylsulfanyl-N(6)-dimethylallyladenosine(37) in tRNA + (sulfur carrier)-H + 5'-deoxyadenosine + L-methionine + A + S-adenosyl-L-homocysteine + 2 H(+). Its function is as follows. Catalyzes the methylthiolation of N6-(dimethylallyl)adenosine (i(6)A), leading to the formation of 2-methylthio-N6-(dimethylallyl)adenosine (ms(2)i(6)A) at position 37 in tRNAs that read codons beginning with uridine. This chain is tRNA-2-methylthio-N(6)-dimethylallyladenosine synthase, found in Porphyromonas gingivalis (strain ATCC BAA-308 / W83).